The sequence spans 89 residues: MAISKEKKNEIIAQYARHEGDTGSVEVQVAVLTWEINHLNNHIKEHKKDHATYRGLMKKIGHRRNLLAYLRRTDVNRYRELIQSLGLRR.

The protein belongs to the universal ribosomal protein uS15 family. In terms of assembly, part of the 30S ribosomal subunit. Forms a bridge to the 50S subunit in the 70S ribosome, contacting the 23S rRNA.

Its function is as follows. One of the primary rRNA binding proteins, it binds directly to 16S rRNA where it helps nucleate assembly of the platform of the 30S subunit by binding and bridging several RNA helices of the 16S rRNA. In terms of biological role, forms an intersubunit bridge (bridge B4) with the 23S rRNA of the 50S subunit in the ribosome. The chain is Small ribosomal subunit protein uS15 from Streptococcus equi subsp. zooepidemicus (strain H70).